A 306-amino-acid polypeptide reads, in one-letter code: Leucotoxin LukEv (306 aa).

The signal sequence occupies residues 1–23 (MLAATLSVGLIAPLASPIQESRA).

It belongs to the aerolysin family. Toxicity requires sequential binding and synergistic association of a class S and a class F component which form heterooligomeric complexes. LukEv (class S) associates with LukDv (class F).

The protein resides in the secreted. Functionally, part of a bi-component leucotoxin that acts by forming pores in the membrane of the target cells. The activity of LukEv-LukDv to rabbit leukocytes is similar to that of the Panton-Valentine leucocidin (PVL). LukEv-LukDv is hemolytic to rabbit red blood cells although the activity is only 8% of gamma-hemolysin. The polypeptide is Leucotoxin LukEv (lukEv) (Staphylococcus aureus (strain NCTC 8325 / PS 47)).